The sequence spans 234 residues: Serum amyloid P-component (234 aa).

Residues 1–22 form the signal peptide; the sequence is MDKLLSLLGVSILAGLLLEAFA. A Pentraxin (PTX) domain is found at 27 to 226; that stretch reads TGKVFVFPRQ…YAVIRPRCVA (200 aa). An N-linked (GlcNAc...) asparagine glycan is attached at asparagine 54. The cysteines at positions 58 and 117 are disulfide-linked. Positions 81, 158, 159, 160, and 170 each coordinate Ca(2+).

It belongs to the pentraxin family. As to quaternary structure, homopentamer. Pentraxin (or pentaxin) have a discoid arrangement of 5 non-covalently bound subunits. It depends on Ca(2+) as a cofactor.

It localises to the secreted. This Mesocricetus auratus (Golden hamster) protein is Serum amyloid P-component (APCS).